The primary structure comprises 436 residues: ATP-dependent protease ATPase subunit HslU (436 aa).

Residues isoleucine 19, 61 to 65 (GVGKT), aspartate 249, glutamate 314, and arginine 386 each bind ATP.

It belongs to the ClpX chaperone family. HslU subfamily. A double ring-shaped homohexamer of HslV is capped on each side by a ring-shaped HslU homohexamer. The assembly of the HslU/HslV complex is dependent on binding of ATP.

Its subcellular location is the cytoplasm. ATPase subunit of a proteasome-like degradation complex; this subunit has chaperone activity. The binding of ATP and its subsequent hydrolysis by HslU are essential for unfolding of protein substrates subsequently hydrolyzed by HslV. HslU recognizes the N-terminal part of its protein substrates and unfolds these before they are guided to HslV for hydrolysis. The chain is ATP-dependent protease ATPase subunit HslU from Bartonella henselae (strain ATCC 49882 / DSM 28221 / CCUG 30454 / Houston 1) (Rochalimaea henselae).